We begin with the raw amino-acid sequence, 690 residues long: MAPFPDEVDVFTAPHWRMKQLVGRYCDKLSKTNFSNNNDFRALLQSLYATFKEFKMHEQIENEYIIGLLQQRSQTIYNVHSDNKLSEMLSLFEKGLKNVKNEYEQLNYAKQLKERLEAFTRDFLPHMKEEEEVFQPMLMEYFTYEELKDIKKKVIAQHCSQKDTAELLRGLSLWNQAEERQKVLKYSVDEKADTEAEVSEHSTGITHLPPEVMLSIFSYLNPQELCRCSQVSTKWSQLAKTGSLWKHLYPVHWARGDWYSGPATELDTEPDEEWVRNRKDESRAFQEWDEDADIDESEESAEESVAISIAQMEKRVLHGLIHNVLPYVGTSVKTLVLAYSSAVSSKMVRQILELCPNLEHLDLTQTDISDSAFDSWSWLGCCQSLRHLDLSGCEKITDMALEKISRALGVLTSHQSGFLKSAGKAASTPWTSKDITMPSTTQYACLHNLTDKGIGEEIDNEHSWTEPVSSESLTSPYVWMLDAEDLADIEDAVEWRHRNVESLCVMETASNFGCSSSGCYSKDIVGLRTSVCWQQHCASPAFAYCGHSFCCTGTALRTMTTLPATSAMCRKALRTTLPRGKDLIYFGSEKSDQETGRVLLFLSLSGCYQITDHGLRALTLGGGLPYLEHLNLSGCLTVTGAGLQDLVSACPSLNDEYFYYCDNINGPHADTASGCQNLQCGFRACCRSGE.

Residues 1-159 (MAPFPDEVDV…IKKKVIAQHC (159 aa)) form a hemerythrin-like region. The Fe(3+) site is built by histidine 15, histidine 57, glutamate 58, glutamate 61, histidine 80, histidine 126, and glutamate 130. The F-box domain occupies 202–248 (STGITHLPPEVMLSIFSYLNPQELCRCSQVSTKWSQLAKTGSLWKHL). 7 LRR repeats span residues 340-364 (SSAVSSKMVRQILELCPNLEHLDLT), 365-392 (QTDISDSAFDSWSWLGCCQSLRHLDLSG), 393-418 (CEKITDMALEKISRALGVLTSHQSGF), 478-507 (VWMLDAEDLADIEDAVEWRHRNVESLCVME), 575-606 (TTLPRGKDLIYFGSEKSDQETGRVLLFLSLSG), 607-634 (CYQITDHGLRALTLGGGLPYLEHLNLSG), and 635-660 (CLTVTGAGLQDLVSACPSLNDEYFYY). [2Fe-2S] cluster contacts are provided by cysteine 661, cysteine 675, cysteine 685, and cysteine 686.

As to quaternary structure, part of a SCF (SKP1-cullin-F-box) protein ligase complex. Interacts with ACO1/IRP1, IREB2/IRP2; the interaction depends on the [2Fe-2S] cluster. Interacts with DCTN1/p150-glued. [2Fe-2S] cluster is required as a cofactor. Polybiquitinated upon iron and oxygen depletion, leading to its degradation by the proteasome. Ubiquitination is regulated by the hemerythrin-like region that acts as an oxygen and iron sensor. Undergoes constitutive ubiquitin-dependent degradation at the steady state by HERC2. Ubiquitously expressed. Highly expressed in early embryogenesis with expression decreasing as the embryo progresses through development (E11 and E15).

The protein resides in the cytoplasm. It localises to the perinuclear region. Its subcellular location is the nucleus. Its pathway is protein modification; protein ubiquitination. With respect to regulation, an iron-sulfur cluster promotes IRP2 polyubiquitination and degradation in response to both iron and oxygen concentrations. Functionally, component of some SCF (SKP1-cullin-F-box) protein ligase complex that plays a central role in iron homeostasis by promoting the ubiquitination and subsequent degradation of IREB2/IRP2. The C-terminal domain of FBXL5 contains a redox-sensitive [2Fe-2S] cluster that, upon oxidation, promotes binding to IRP2 to effect its oxygen-dependent degradation. Under iron deficiency conditions, the N-terminal hemerythrin-like (Hr) region, which contains a diiron metal center, cannot bind iron and undergoes conformational changes that destabilize the FBXL5 protein and cause its ubiquitination and degradation. When intracellular iron levels start rising, the Hr region is stabilized. Additional increases in iron levels facilitate the assembly and incorporation of a redox active [2Fe-2S] cluster in the C-terminal domain. Only when oxygen level is high enough to maintain the cluster in its oxidized state can FBXL5 recruit IRP2 as a substrate for polyubiquination and degradation. Promotes ubiquitination and subsequent degradation of the dynactin complex component DCTN1. Within the nucleus, promotes the ubiquitination of SNAI1; preventing its interaction with DNA and promoting its degradation. Negatively regulates DNA damage response by mediating the ubiquitin-proteasome degradation of the DNA repair protein NABP2. The chain is F-box/LRR-repeat protein 5 (Fbxl5) from Mus musculus (Mouse).